An 81-amino-acid chain; its full sequence is Photosystem I iron-sulfur center (81 aa).

4Fe-4S ferredoxin-type domains lie at 2-31 (SHTVKIYDTCIGCTQCVRACPTDVLEMVPW) and 37-68 (GQIASSPRVEDCVGCKRCETACPTDFLSVRVY). Positions 11, 14, 17, 21, 48, 51, 54, and 58 each coordinate [4Fe-4S] cluster.

In terms of assembly, the eukaryotic PSI reaction center is composed of at least 11 subunits. Requires [4Fe-4S] cluster as cofactor.

It localises to the plastid. Its subcellular location is the chloroplast thylakoid membrane. It carries out the reaction reduced [plastocyanin] + hnu + oxidized [2Fe-2S]-[ferredoxin] = oxidized [plastocyanin] + reduced [2Fe-2S]-[ferredoxin]. In terms of biological role, apoprotein for the two 4Fe-4S centers FA and FB of photosystem I (PSI); essential for photochemical activity. FB is the terminal electron acceptor of PSI, donating electrons to ferredoxin. The C-terminus interacts with PsaA/B/D and helps assemble the protein into the PSI complex. Required for binding of PsaD and PsaE to PSI. PSI is a plastocyanin/cytochrome c6-ferredoxin oxidoreductase, converting photonic excitation into a charge separation, which transfers an electron from the donor P700 chlorophyll pair to the spectroscopically characterized acceptors A0, A1, FX, FA and FB in turn. In Thalassiosira pseudonana (Marine diatom), this protein is Photosystem I iron-sulfur center.